Consider the following 565-residue polypeptide: Wee1-like protein kinase 2 (565 aa).

2 stretches are compositionally biased toward basic and acidic residues: residues 1–12 (MGDNGDNKELKQ) and 26–52 (EGQK…DSEA). 2 disordered regions span residues 1 to 142 (MGDN…TPGP) and 169 to 189 (KSNG…EEGK). Phosphoserine is present on S77. Positions 173–175 (KRK) match the Nuclear localization signal motif. A compositionally biased stretch (basic and acidic residues) spans 178–189 (RDLEEAGPEEGK). One can recognise a Protein kinase domain in the interval 214–492 (FLEVEKIGVG…TRSRVLCPSL (279 aa)). Residues 220-228 (IGVGEFGTV) and K243 contribute to the ATP site. Residues 317–331 (KLKDILLQISLGLKY) carry the Nuclear export signal motif. D341 serves as the catalytic Proton acceptor. Mg(2+) contacts are provided by N346 and D382. Residues 495–521 (TEELQQQLNLEKFKTATLERELKEVQR) are a coiled coil. A disordered region spans residues 518-565 (EVQRAQSSKEGQSSPGVTGTHTGSRSTRRLVGGKSAKSSSFTWGQSSP). Polar residues-rich tracts occupy residues 521-534 (RAQS…SPGV) and 553-565 (AKSS…QSSP).

Belongs to the protein kinase superfamily. Ser/Thr protein kinase family. WEE1 subfamily. In terms of processing, phosphorylation leads to increase its activity. In terms of tissue distribution, ovary-specific.

It is found in the nucleus. It catalyses the reaction L-tyrosyl-[protein] + ATP = O-phospho-L-tyrosyl-[protein] + ADP + H(+). Its function is as follows. Oocyte-specific protein tyrosine kinase that phosphorylates and inhibits CDK1 and acts as a key regulator of meiosis during both prophase I and metaphase II. Required to maintain meiotic arrest in oocytes during the germinal vesicle (GV) stage, a long period of quiescence at dictyate prophase I, by phosphorylating CDK1 at 'Tyr-15', leading to inhibit CDK1 activity and prevent meiotic reentry. Also required for metaphase II exit during egg activation by phosphorylating CDK1 at 'Tyr-15', to ensure exit from meiosis in oocytes and promote pronuclear formation. This is Wee1-like protein kinase 2 (WEE2) from Sus scrofa (Pig).